A 306-amino-acid chain; its full sequence is Protein SEC13 homolog (306 aa).

6 WD repeats span residues 11–50 (QHRD…QSYP), 56–97 (GHNG…WQKT), 102–143 (THEA…QQWQ), 150–195 (CHDQ…NEWT), 202–245 (CHKD…TAEW), and 252–291 (QAPC…QWIK).

It belongs to the WD repeat SEC13 family. In terms of assembly, probably part of the GATOR complex.

It is found in the cytoplasmic vesicle. The protein localises to the COPII-coated vesicle membrane. Its subcellular location is the endoplasmic reticulum membrane. It localises to the nucleus. The protein resides in the nuclear pore complex. It is found in the lysosome membrane. Functions as a component of the nuclear pore complex (NPC) and the COPII coat. Its function is as follows. As a component of the GATOR complex may function in the amino acid-sensing branch of the TORC1 signaling pathway. In Caenorhabditis briggsae, this protein is Protein SEC13 homolog.